A 268-amino-acid polypeptide reads, in one-letter code: NH(3)-dependent NAD(+) synthetase (268 aa).

Residue 46 to 53 coordinates ATP; sequence GVSGGQDS. D52 provides a ligand contact to Mg(2+). Residue R140 coordinates deamido-NAD(+). T160 is an ATP binding site. E165 is a Mg(2+) binding site. Deamido-NAD(+) contacts are provided by K173 and D180. K189 provides a ligand contact to ATP. 260-261 contributes to the deamido-NAD(+) binding site; the sequence is HK.

This sequence belongs to the NAD synthetase family. As to quaternary structure, homodimer.

It carries out the reaction deamido-NAD(+) + NH4(+) + ATP = AMP + diphosphate + NAD(+) + H(+). It participates in cofactor biosynthesis; NAD(+) biosynthesis; NAD(+) from deamido-NAD(+) (ammonia route): step 1/1. In terms of biological role, catalyzes the ATP-dependent amidation of deamido-NAD to form NAD. Uses ammonia as a nitrogen source. This chain is NH(3)-dependent NAD(+) synthetase, found in Buchnera aphidicola subsp. Acyrthosiphon pisum (strain Tuc7).